Reading from the N-terminus, the 486-residue chain is Zinc finger CCCH domain-containing protein 49 (486 aa).

A C3H1-type zinc finger spans residues 157-184; that stretch reads RNRAHVCSFYVRGECTRGAECPYRHEMP. The region spanning 228 to 301 is the RRM domain; that stretch reads RTLYIGGLDS…VRLKLMWGKP (74 aa). 2 disordered regions span residues 329-348 and 379-486; these read SQQQ…QQQP and LVES…NGMT. Composition is skewed to low complexity over residues 389–407 and 415–430; these read PGPQ…GQSY and YHGG…YGGY. Pro residues predominate over residues 431-444; the sequence is MPPPRMPYQQPPQY. The span at 445–486 shows a compositional bias: low complexity; it reads PAYQPMLAPPAQSQASSLQQPAPATQQLGQGPQQQTTQNGMT.

This chain is Zinc finger CCCH domain-containing protein 49, found in Oryza sativa subsp. japonica (Rice).